A 65-amino-acid chain; its full sequence is Conotoxin Am6.4 (65 aa).

Residues 1–33 (STGKRNAGKLTVTDDVEADRDTDPDDKDPSVHN) form a disordered region. Residues 1 to 36 (STGKRNAGKLTVTDDVEADRDTDPDDKDPSVHNSWR) constitute a propeptide that is removed on maturation. Acidic residues predominate over residues 14–26 (DDVEADRDTDPDD). Cystine bridges form between Cys40–Cys50, Cys45–Cys59, and Cys49–Cys64.

In terms of processing, is not hydroxylated. As to expression, expressed by the venom duct.

The protein localises to the secreted. In terms of biological role, probable toxin that inhibits ion channels. The sequence is that of Conotoxin Am6.4 from Conus amadis (Amadis cone).